Reading from the N-terminus, the 42-residue chain is Proline-rich antimicrobial peptide 2 (42 aa).

In terms of tissue distribution, hemolymph.

It is found in the secreted. In terms of biological role, antimicrobial protein. Has antibacterial activity against the Gram-positive bacterium M.luteus (MIC=8.6 uM). Lacks antibacterial activity against the Gram-positive bacteria B.circulans, L.monocytogenes, S.aureus, and S.lutea, and the Gram-negative bacteria E.coli D31, E.coli ATCC 25922, and S.typhimurium. Lacks antifungal activity against S.cerevisiae, P.pastoris, Z.marxianus, C.albicans, C.fructus, C.wickerhamii, A.niger, F.oxysporum, and T.harizianum. The protein is Proline-rich antimicrobial peptide 2 of Galleria mellonella (Greater wax moth).